A 727-amino-acid polypeptide reads, in one-letter code: MAQHTAAAAGGDEEVAEAEAAAAAAAGSTLRHRHAGKGAEEHEAAGGGGGGRNGGADDPDATSVERVFADKAVPSWREQLTLRAFVVSALLAVMFSVIVMKLNLTTGIIPSLNVSAGLLGFFFVRLWTSAVERIGLLKQPFTRQENTVIQTCVVSAYGIAFSGGFGSYLFGMSETIAKQATEAKDAQNIKDPHLGWMIGFLFLVSFIGLFALVPLRKIMIVDYKLTYPSGTATAYLINGFHTPEGAKLAKKQVKTLGKYFLFSFFWGFFQWFYTAGDDCGFKNFPTLGLEAYNNRFFFDFSPTYVGVGMICPYIVNVSVLLGGILSWGVMWPLIAKKKGSWYPADISDNSLHGLQAYRVFISIALILGDGLYNFLKVLIRTIAGFISMVQNNSKGMLPVSDNGMSMSTAEEVSFDDERRTEIFLKDQIPKSVAYGGYVVVAALSIGTLPEIFPQLKWYYILVAYIVAPVLAFCNAYGSGLTDWSLASTYGKLAIFVFGAWAGLSHGGVLVGLAACGVMMSIVSTASDLMQDFKTGYLTLASPRSMFISQVIGTGMGCVIAPCVFWLFYKAFSNIGTSGTEYPAPYAIVYRNMAILGVDGFNSLPENCLTLCYIFFAAAIAINLIRDLAPHKVSRFIPLPMAMAIPFYIGSYFAIDMFLGSVILFVWEKLNKAKADAFGPAVASGLICGDGIWTLPQSILALAKVKPPICMKFLSRAANAKVDSFLAG.

2 stretches are compositionally biased toward low complexity: residues 1–10 (MAQHTAAAAG) and 18–27 (AEAAAAAAAG). Residues 1 to 61 (MAQHTAAAAG…RNGGADDPDA (61 aa)) form a disordered region. Over residues 45 to 54 (AGGGGGGRNG) the composition is skewed to gly residues. The next 14 helical transmembrane spans lie at 84–104 (AFVV…KLNL), 107–127 (GIIP…VRLW), 152–172 (CVVS…LFGM), 194–214 (LGWM…ALVP), 256–276 (LGKY…YTAG), 314–334 (IVNV…WPLI), 359–379 (VFIS…KVLI), 432–452 (VAYG…PEIF), 460–480 (ILVA…GSGL), 492–512 (LAIF…LVGL), 546–566 (FISQ…VFWL), 604–624 (PENC…INLI), 646–666 (FYIG…LFVW), and 681–701 (VASG…ILAL).

Belongs to the YSL (TC 2.A.67.2) family. Expressed in leaves and at low levels in roots.

Its subcellular location is the membrane. In terms of biological role, may be involved in the transport of nicotianamine-chelated metals. The sequence is that of Probable metal-nicotianamine transporter YSL14 (YSL14) from Oryza sativa subsp. japonica (Rice).